Here is a 234-residue protein sequence, read N- to C-terminus: Zinc finger FYVE domain-containing protein 21 (234 aa).

Residues 44-104 (DKECRRCMQC…QCAECALVSL (61 aa)) form an FYVE-type zinc finger. Residues Cys50, Cys53, Cys66, Cys69, Cys74, Cys77, Cys96, and Cys99 each coordinate Zn(2+). Residues 107–234 (AEFYDKQLKV…AKLLYESRDQ (128 aa)) form a PH-like region.

Interacts with PTK2/FAK1.

The protein resides in the cell junction. Its subcellular location is the focal adhesion. It localises to the cytoplasmic vesicle. It is found in the endosome. Its function is as follows. Plays a role in cell adhesion, and thereby in cell motility which requires repeated formation and disassembly of focal adhesions. Regulates microtubule-induced PTK2/FAK1 dephosphorylation, an event important for focal adhesion disassembly, as well as integrin beta-1/ITGB1 cell surface expression. In Homo sapiens (Human), this protein is Zinc finger FYVE domain-containing protein 21 (ZFYVE21).